The following is a 428-amino-acid chain: AP2-like ethylene-responsive transcription factor At2g41710 (428 aa).

The segment covering 1–10 (MASVSSSDQG) has biased composition (polar residues). Positions 1-28 (MASVSSSDQGPKTEAGCSGGGGGESSET) are disordered. The segment at residues 70 to 136 (IYRGVTRHRW…WGPGTLINFP (67 aa)) is a DNA-binding region (AP2/ERF).

This sequence belongs to the AP2/ERF transcription factor family. AP2 subfamily.

The protein resides in the nucleus. Functionally, probably acts as a transcriptional activator. Binds to the GCC-box pathogenesis-related promoter element. May be involved in the regulation of gene expression by stress factors and by components of stress signal transduction pathways. This chain is AP2-like ethylene-responsive transcription factor At2g41710, found in Arabidopsis thaliana (Mouse-ear cress).